The following is a 308-amino-acid chain: B- and T-lymphocyte attenuator (308 aa).

The N-terminal stretch at 1–29 is a signal peptide; that stretch reads MKTVPAMLVTPRSFREFFILLLGLWSILC. At 30–183 the chain is on the extracellular side; that stretch reads KEPTKRIGEE…ERPGRTWLLY (154 aa). The Ig-like V-type domain maps to 32–134; sequence PTKRIGEECR…SANLNSEVIN (103 aa). 3 disulfide bridges follow: Cys40–Cys69, Cys64–Cys124, and Cys78–Cys85. Residues Asn49, Asn74, Asn81, Asn148, and Asn165 are each glycosylated (N-linked (GlcNAc...) asparagine). Residues 184–204 form a helical membrane-spanning segment; that stretch reads ALLPLGTSLLLLACVCLLCFL. The Cytoplasmic segment spans residues 205-308; sequence RRIQGKEKKP…TEYASICVRS (104 aa).

In terms of assembly, interacts with tyrosine phosphatases PTPN6/SHP-1 and PTPN11/SHP-2. Interacts with TNFRSF14/HVEM (via cysteine-rich domain 1). Post-translationally, phosphorylated on Tyr residues by TNFRSF14 and by antigen receptors cross-linking, both inducing association with PTPN6 and PTPN11. In terms of processing, N-glycosylated.

The protein resides in the cell membrane. Its function is as follows. Inhibitory receptor on lymphocytes that negatively regulates antigen receptor signaling via PTPN6/SHP-1 and PTPN11/SHP-2. May interact in cis (on the same cell) or in trans (on other cells) with TNFRSF14. In cis interactions, appears to play an immune regulatory role inhibiting in trans interactions in naive T cells to maintain a resting state. In trans interactions, can predominate during adaptive immune response to provide survival signals to effector T cells. The sequence is that of B- and T-lymphocyte attenuator from Rattus norvegicus (Rat).